The primary structure comprises 762 residues: Probable inorganic carbon transporter subunit DabA (762 aa).

4 residues coordinate Zn(2+): Cys-279, Asp-281, His-461, and Cys-476.

It belongs to the inorganic carbon transporter (TC 9.A.2) DabA family. In terms of assembly, forms a complex with DabB. The cofactor is Zn(2+).

It localises to the cell inner membrane. In terms of biological role, part of an energy-coupled inorganic carbon pump. The polypeptide is Probable inorganic carbon transporter subunit DabA (Legionella pneumophila (strain Corby)).